The primary structure comprises 160 residues: Cathelin-related peptide SC5 (160 aa).

Positions 1-29 (METQRASLSLGRCSLWLLLLGLALPSASA) are cleaved as a signal peptide. A propeptide spanning residues 30–131 (QVLSYREAVL…DITCAEPQSV (102 aa)) is cleaved from the precursor. Cystine bridges form between Cys86–Cys97 and Cys108–Cys125.

The protein belongs to the cathelicidin family.

It localises to the secreted. Broad spectrum bactericidal agent. This chain is Cathelin-related peptide SC5, found in Ovis aries (Sheep).